Reading from the N-terminus, the 297-residue chain is ClpXP adapter protein SpxH (297 aa).

The protein belongs to the SpxH family. Interacts with Spx.

Its subcellular location is the cytoplasm. Adapter protein required for efficient degradation of Spx by ClpXP under non-stress conditions. Interaction with Spx stabilizes Spx and exposes the C-terminus of Spx for recognition and proteolysis by ClpXP. This is ClpXP adapter protein SpxH from Bacillus thuringiensis subsp. konkukian (strain 97-27).